The primary structure comprises 275 residues: Diaminopimelate epimerase (275 aa).

Residues asparagine 12, glutamine 45, and asparagine 65 each coordinate substrate. The active-site Proton donor is cysteine 74. Substrate contacts are provided by residues 75-76 (GN), asparagine 158, asparagine 191, and 209-210 (ER). Cysteine 218 acts as the Proton acceptor in catalysis. 219 to 220 (GS) contacts substrate.

The protein belongs to the diaminopimelate epimerase family. Homodimer.

It localises to the cytoplasm. The enzyme catalyses (2S,6S)-2,6-diaminopimelate = meso-2,6-diaminopimelate. The protein operates within amino-acid biosynthesis; L-lysine biosynthesis via DAP pathway; DL-2,6-diaminopimelate from LL-2,6-diaminopimelate: step 1/1. Its function is as follows. Catalyzes the stereoinversion of LL-2,6-diaminopimelate (L,L-DAP) to meso-diaminopimelate (meso-DAP), a precursor of L-lysine and an essential component of the bacterial peptidoglycan. The polypeptide is Diaminopimelate epimerase (Shewanella amazonensis (strain ATCC BAA-1098 / SB2B)).